A 138-amino-acid chain; its full sequence is ATP synthase epsilon chain (138 aa).

Belongs to the ATPase epsilon chain family. F-type ATPases have 2 components, CF(1) - the catalytic core - and CF(0) - the membrane proton channel. CF(1) has five subunits: alpha(3), beta(3), gamma(1), delta(1), epsilon(1). CF(0) has three main subunits: a, b and c.

The protein resides in the cell inner membrane. In terms of biological role, produces ATP from ADP in the presence of a proton gradient across the membrane. The protein is ATP synthase epsilon chain of Wigglesworthia glossinidia brevipalpis.